The primary structure comprises 86 residues: MEILKVSAKSSPNSVAGALAGVLRERGAAEIQAIGAGALNQAVKAVAIARGFVAPSGVDLICIPAFTDIQIDGEERTAIKLIVEPR.

Its function is as follows. Interferes with sporulation at an early stage. Seems to play a positive role in allowing cells to progress beyond stage V of sporulation. This chain is Stage V sporulation protein S, found in Bacillus subtilis (strain 168).